The sequence spans 98 residues: Plastocyanin (98 aa).

Residues 1–98 (DVTVKLGADS…AGMKGTITVQ (98 aa)) enclose the Plastocyanin-like domain. Cu cation-binding residues include histidine 38, cysteine 83, histidine 86, and methionine 91.

The protein belongs to the plastocyanin family. The cofactor is Cu(2+).

It is found in the plastid. Its subcellular location is the chloroplast thylakoid membrane. Its function is as follows. Participates in electron transfer between P700 and the cytochrome b6-f complex in photosystem I. In Scenedesmus fuscus (Green alga), this protein is Plastocyanin (petE).